Consider the following 145-residue polypeptide: Large ribosomal subunit protein uL13 (145 aa).

Belongs to the universal ribosomal protein uL13 family. In terms of assembly, part of the 50S ribosomal subunit.

Its function is as follows. This protein is one of the early assembly proteins of the 50S ribosomal subunit, although it is not seen to bind rRNA by itself. It is important during the early stages of 50S assembly. In Brevibacillus brevis (strain 47 / JCM 6285 / NBRC 100599), this protein is Large ribosomal subunit protein uL13.